The chain runs to 1299 residues: DExH-box ATP-dependent RNA helicase DExH6 (1299 aa).

The region spanning P15–R82 is the R3H domain. The region spanning T197–P366 is the Helicase ATP-binding domain. G210–T217 provides a ligand contact to ATP. Positions D313–H316 match the DEIH box motif. The Helicase C-terminal domain maps to L537–D711. 2 disordered regions span residues P987–S1039 and I1175–K1299. Residues D992 to V1006 are compositionally biased toward acidic residues. A compositionally biased stretch (low complexity) spans A1007–E1020. Positions M1023 to R1032 are enriched in basic and acidic residues. 3 stretches are compositionally biased toward polar residues: residues P1176–D1193, N1204–A1214, and P1239–T1251. Residues K1182–K1200 carry the Bipartite nuclear localization signal motif. A Bipartite nuclear localization signal motif is present at residues K1267 to K1283. Residues S1279–K1299 show a composition bias toward basic and acidic residues.

It belongs to the DExH box helicase family. Specifically expressed in the tapetum and vascular tissues.

It is found in the nucleus. The catalysed reaction is ATP + H2O = ADP + phosphate + H(+). In terms of biological role, may function as an ATP-dependent RNA/DNA helicase. The chain is DExH-box ATP-dependent RNA helicase DExH6 from Arabidopsis thaliana (Mouse-ear cress).